A 127-amino-acid polypeptide reads, in one-letter code: PanD regulatory factor (127 aa).

The N-acetyltransferase domain occupies 1–127 (MKLTILRLEH…TAQHDGWEKR (127 aa)). Residues 66 to 68 (LRV) and 72 to 79 (TRRRGVGQ) each bind CoA.

This sequence belongs to the PanZ/PanM family. As to quaternary structure, interacts with PanD in the presence of CoA. Monomer.

Its function is as follows. Controls both the activation and catalytic activity of PanD in a coenzyme A (CoA)-dependent fashion. Binding of CoA or a derivative to PanM leads to interaction with PanD, which promotes the processing and activation of pro-PanD, and subsequent substrate-mediated inhibition of the active form of PanD. Lacks acetyltransferase activity. The protein is PanD regulatory factor of Salmonella typhimurium (strain LT2 / SGSC1412 / ATCC 700720).